The sequence spans 255 residues: uncharacterized protein (255 aa).

2 helical membrane passes run 99 to 119 (ISLI…ITSF) and 146 to 166 (YIGS…ILFL).

Its subcellular location is the mitochondrion membrane. This is an uncharacterized protein from Schizosaccharomyces pombe (strain 972 / ATCC 24843) (Fission yeast).